Here is a 462-residue protein sequence, read N- to C-terminus: Glycoprotein endo-alpha-1,2-mannosidase (462 aa).

The Cytoplasmic segment spans residues 1 to 8 (MAKFRRGT). Residues 9-29 (CIILALFILFIFSLMMGLKML) traverse the membrane as a helical; Signal-anchor for type II membrane protein segment. At 30 to 462 (RPNTATFGAP…YALDHQLPVS (433 aa)) the chain is on the lumenal side. A catalytic region spans residues 60 to 462 (DFQKSDRINS…YALDHQLPVS (403 aa)).

The protein belongs to the glycosyl hydrolase 99 family. Post-translationally, undergoes proteolytic cleavage in the C-terminal region.

The protein resides in the golgi apparatus membrane. It carries out the reaction N-{alpha-Glc-(1-&gt;3)-alpha-Man-(1-&gt;2)-alpha-Man-(1-&gt;2)-alpha-Man-(1-&gt;3)-[alpha-Man-(1-&gt;2)-alpha-Man-(1-&gt;3)-[alpha-Man-(1-&gt;2)-alpha-Man-(1-&gt;6)]-alpha-Man-(1-&gt;6)]-beta-Man-(1-&gt;4)-beta-GlcNAc-(1-&gt;4)-beta-GlcNAc}-L-asparaginyl-[protein] + H2O = alpha-D-glucosyl-(1-&gt;3)-D-mannopyranose + N(4)-{alpha-D-Man-(1-&gt;2)-alpha-D-Man-(1-&gt;3)-[alpha-D-Man-(1-&gt;2)-alpha-D-Man-(1-&gt;3)-[alpha-D-Man-(1-&gt;2)-alpha-D-Man-(1-&gt;6)]-alpha-D-Man-(1-&gt;6)]-beta-D-Man-(1-&gt;4)-beta-D-GlaNAc-(1-&gt;4)-beta-D-GlcNAc}-L-asparaginyl-[protein] (N-glucan mannose isomer 8A1,2,3B1,2). This Pongo abelii (Sumatran orangutan) protein is Glycoprotein endo-alpha-1,2-mannosidase (MANEA).